A 117-amino-acid polypeptide reads, in one-letter code: Small ribosomal subunit protein eS25 (117 aa).

Positions 1 to 38 are disordered; that stretch reads MPPKKDAKSSAKQPQKTQKKKEGSGGGKAKKKKWSKGK. Residues 28 to 37 show a composition bias toward basic residues; that stretch reads KAKKKKWSKG.

This sequence belongs to the eukaryotic ribosomal protein eS25 family.

The sequence is that of Small ribosomal subunit protein eS25 (RpS25) from Drosophila melanogaster (Fruit fly).